A 958-amino-acid polypeptide reads, in one-letter code: Coiled-coil domain-containing protein 33 (958 aa).

A C2 domain is found at 214–353; the sequence is SPEEPLIASQ…LVKPTESGKA (140 aa). The segment covering 602-617 has biased composition (polar residues); sequence SKDTVSSTMDLSTSTP. A disordered region spans residues 602-628; the sequence is SKDTVSSTMDLSTSTPREAEEEPLVPE. Coiled coils occupy residues 632–774 and 859–899; these read DTEM…LEDR and FNLL…RLQE. The disordered stretch occupies residues 899-958; that stretch reads EQEKGFRHPSNSIIIEQPSALTHSMDLKQPSELEPLLPSSDSKLNKPLSPQKETANSQQT. 2 stretches are compositionally biased toward polar residues: residues 907 to 920 and 949 to 958; these read PSNS…SALT and QKETANSQQT.

This is Coiled-coil domain-containing protein 33 (CCDC33) from Homo sapiens (Human).